The primary structure comprises 221 residues: Deoxyribose-phosphate aldolase (221 aa).

Asp-89 functions as the Proton donor/acceptor in the catalytic mechanism. Lys-151 (schiff-base intermediate with acetaldehyde) is an active-site residue. The active-site Proton donor/acceptor is the Lys-180.

It belongs to the DeoC/FbaB aldolase family. DeoC type 1 subfamily.

The protein localises to the cytoplasm. It catalyses the reaction 2-deoxy-D-ribose 5-phosphate = D-glyceraldehyde 3-phosphate + acetaldehyde. The protein operates within carbohydrate degradation; 2-deoxy-D-ribose 1-phosphate degradation; D-glyceraldehyde 3-phosphate and acetaldehyde from 2-deoxy-alpha-D-ribose 1-phosphate: step 2/2. Its function is as follows. Catalyzes a reversible aldol reaction between acetaldehyde and D-glyceraldehyde 3-phosphate to generate 2-deoxy-D-ribose 5-phosphate. This is Deoxyribose-phosphate aldolase from Mesomycoplasma hyopneumoniae (strain 232) (Mycoplasma hyopneumoniae).